Reading from the N-terminus, the 291-residue chain is MIIIGGTATNGIDENLSKIISVPLLKVEHKVFPDGESYIRIPQHITNQEILVVQSLYPPQDKHFVELLLILETLADMKNNKITAIVPYLAYSRQDRRFKEGEALSIKTILNAIARAGADVLIVIEPHKEEELSYFGKEVKIADPMPELAKEVSKKVEKPFVLAPDRGALERAKRLAEQLNAEYSYIEKERDRDTGEVRIKNLPELRLSGKDVIIVDDIISTGGTMIQATRAAYEHGARKVISVAVHSLFLDNAYEKLINSGVKEIVTTNTIPQDPSKVTVVDVSPAIARKI.

ATP-binding positions include 34-36 (DGE) and 93-94 (RQ). Mg(2+) contacts are provided by His-127 and Asp-165. The active site involves Lys-188. D-ribose 5-phosphate is bound by residues Arg-190, Asp-216, and 220-224 (STGGT).

The protein belongs to the ribose-phosphate pyrophosphokinase family. Class III (archaeal) subfamily. It depends on Mg(2+) as a cofactor.

The protein resides in the cytoplasm. It catalyses the reaction D-ribose 5-phosphate + ATP = 5-phospho-alpha-D-ribose 1-diphosphate + AMP + H(+). Its pathway is metabolic intermediate biosynthesis; 5-phospho-alpha-D-ribose 1-diphosphate biosynthesis; 5-phospho-alpha-D-ribose 1-diphosphate from D-ribose 5-phosphate (route I): step 1/1. In terms of biological role, involved in the biosynthesis of the central metabolite phospho-alpha-D-ribosyl-1-pyrophosphate (PRPP) via the transfer of pyrophosphoryl group from ATP to 1-hydroxyl of ribose-5-phosphate (Rib-5-P). The chain is Ribose-phosphate pyrophosphokinase from Sulfurisphaera tokodaii (strain DSM 16993 / JCM 10545 / NBRC 100140 / 7) (Sulfolobus tokodaii).